The chain runs to 462 residues: tRNA modification GTPase MnmE (462 aa).

(6S)-5-formyl-5,6,7,8-tetrahydrofolate contacts are provided by R23, E88, and R127. Positions G224–F383 constitute a TrmE-type G domain. N234 is a binding site for K(+). Residues N234 to S239, T253 to T259, and D278 to G281 contribute to the GTP site. S238 lines the Mg(2+) pocket. Positions 253, 255, and 258 each coordinate K(+). A Mg(2+)-binding site is contributed by T259. Position 462 (K462) interacts with (6S)-5-formyl-5,6,7,8-tetrahydrofolate.

It belongs to the TRAFAC class TrmE-Era-EngA-EngB-Septin-like GTPase superfamily. TrmE GTPase family. As to quaternary structure, homodimer. Heterotetramer of two MnmE and two MnmG subunits. K(+) serves as cofactor.

The protein localises to the cytoplasm. Functionally, exhibits a very high intrinsic GTPase hydrolysis rate. Involved in the addition of a carboxymethylaminomethyl (cmnm) group at the wobble position (U34) of certain tRNAs, forming tRNA-cmnm(5)s(2)U34. This is tRNA modification GTPase MnmE from Geobacillus kaustophilus (strain HTA426).